The sequence spans 337 residues: CMP-sialic acid transporter (337 aa).

Residues 1–9 (MAAPRDNVT) lie on the Cytoplasmic side of the membrane. The helical transmembrane segment at 10-30 (LLFKLYCLAVMTLMAAVYTIA) threads the bilayer. The Lumenal portion of the chain corresponds to 31–45 (LRYTRTSDKELYFST). Residues 46–64 (TAVCITEVIKLLLSVGILA) form a helical membrane-spanning segment. Lys55 contacts CMP-N-acetyl-beta-neuraminate. Topologically, residues 65 to 87 (KETGSLGRFKASLRENVLGSPKE) are cytoplasmic. Residues 88–108 (LLKLSVPSLVYAVQNNMAFLA) traverse the membrane as a helical segment. CMP-N-acetyl-beta-neuraminate is bound at residue 101-102 (QN). Topologically, residues 109-114 (LSNLDA) are lumenal. A helical membrane pass occupies residues 115–135 (AVYQVTYQLKIPCTALCTVLM). Residue 117 to 124 (YQVTYQLK) participates in CMP-N-acetyl-beta-neuraminate binding. Residues 136-141 (LNRTLS) lie on the Cytoplasmic side of the membrane. A helical transmembrane segment spans residues 142 to 160 (KLQWVSVFMLCAGVTLVQW). Topologically, residues 161–175 (KPAQATKVVVEQNPL) are lumenal. Residues 176 to 196 (LGFGAIAIAVLCSGFAGVYFE) form a helical membrane-spanning segment. Ser188 provides a ligand contact to CMP-N-acetyl-beta-neuraminate. At 197–209 (KVLKSSDTSLWVR) the chain is on the cytoplasmic side. 210–214 (NIQMY) lines the CMP-N-acetyl-beta-neuraminate pocket. The helical transmembrane segment at 210 to 228 (NIQMYLSGIIVTLAGVYLS) threads the bilayer. Over 229–243 (DGAEIKEKGFFYGYT) the chain is Lumenal. The chain crosses the membrane as a helical span at residues 244-262 (YYVWFVIFLASVGGLYTSV). Over 263-269 (VVKYTDN) the chain is Cytoplasmic. The helical transmembrane segment at 270–288 (IMKGFSAAAAIVLSTIASV) threads the bilayer. Lys272 contacts CMP-N-acetyl-beta-neuraminate. Over 289–296 (MLFGLQIT) the chain is Lumenal. The helical transmembrane segment at 297–315 (LTFALGTLLVCVSIYLYGL) threads the bilayer. Residues 316–337 (PRQDTTSIQQGETASKERVIGV) are Cytoplasmic-facing. Residues 316–337 (PRQDTTSIQQGETASKERVIGV) form a disordered region.

Belongs to the nucleotide-sugar transporter family. SLC35A subfamily. In terms of assembly, monomer.

It is found in the golgi apparatus membrane. It localises to the golgi apparatus. The catalysed reaction is CMP-N-acetyl-beta-neuraminate(in) + CMP(out) = CMP-N-acetyl-beta-neuraminate(out) + CMP(in). It catalyses the reaction CMP-N-acetyl-beta-neuraminate(in) + AMP(out) = CMP-N-acetyl-beta-neuraminate(out) + AMP(in). It carries out the reaction CDP-L-ribitol(in) + CDP(out) = CDP-L-ribitol(out) + CDP(in). The enzyme catalyses UMP(out) + CMP-N-acetyl-beta-neuraminate(in) = UMP(in) + CMP-N-acetyl-beta-neuraminate(out). Transports CMP-sialic acid from the cytosol into the Golgi apparatus, functioning as an antiporter that exchanges CMP-sialic acid for CMP. Binds both CMP-sialic acid and free CMP, but has higher affinity for free CMP. Also able to exchange CMP-sialic acid for AMP and UMP. Also mediates the transport of CDP-ribitol. The polypeptide is CMP-sialic acid transporter (Homo sapiens (Human)).